A 355-amino-acid chain; its full sequence is 3,4-dihydroxy-2-butanone 4-phosphate synthase (355 aa).

The tract at residues 1 to 202 is DHBP synthase; it reads MYHKRIKEAI…VSDIIQYRLN (202 aa). Residues 27-28, Asp32, 139-143, and Glu163 contribute to the D-ribulose 5-phosphate site; these read RE and RTGHT. Glu28 lines the Mg(2+) pocket. His142 contributes to the Mg(2+) binding site. The interval 203–355 is GTP cyclohydrolase II-like; it reads FENLLREITR…NLHLVEKIEV (153 aa).

In the N-terminal section; belongs to the DHBP synthase family. The protein in the C-terminal section; belongs to the GTP cyclohydrolase II family. It depends on Mg(2+) as a cofactor. The cofactor is Mn(2+).

It carries out the reaction D-ribulose 5-phosphate = (2S)-2-hydroxy-3-oxobutyl phosphate + formate + H(+). The protein operates within cofactor biosynthesis; riboflavin biosynthesis; 2-hydroxy-3-oxobutyl phosphate from D-ribulose 5-phosphate: step 1/1. In terms of biological role, catalyzes the conversion of D-ribulose 5-phosphate to formate and 3,4-dihydroxy-2-butanone 4-phosphate. This Helicobacter hepaticus (strain ATCC 51449 / 3B1) protein is 3,4-dihydroxy-2-butanone 4-phosphate synthase (ribB).